Consider the following 1210-residue polypeptide: Epidermal growth factor receptor (1210 aa).

An N-terminal signal peptide occupies residues 1 to 24 (MRPSGTAGAALLALLAALCPASRA). Residues 25–645 (LEEKKVCQGT…CARNGPKIPS (621 aa)) are Extracellular-facing. Cysteine 31 and cysteine 58 are disulfide-bonded. The stretch at 75–300 (DLSFLKTIQE…CVKKCPRNYV (226 aa)) is one Approximate repeat. Residues asparagine 128, asparagine 175, and asparagine 196 are each glycosylated (N-linked (GlcNAc...) asparagine). Intrachain disulfides connect cysteine 157–cysteine 187, cysteine 190–cysteine 199, cysteine 194–cysteine 207, cysteine 215–cysteine 223, cysteine 219–cysteine 231, cysteine 232–cysteine 240, cysteine 236–cysteine 248, cysteine 251–cysteine 260, cysteine 264–cysteine 291, cysteine 295–cysteine 307, cysteine 311–cysteine 326, cysteine 329–cysteine 333, and cysteine 337–cysteine 362. Serine 229 carries the post-translational modification Phosphoserine. N-linked (GlcNAc...) asparagine glycosylation is found at asparagine 352, asparagine 361, asparagine 413, and asparagine 444. Residues 390–600 (QELDILKTVK…CVKTCPAGVM (211 aa)) form an Approximate repeat. Disulfide bonds link cysteine 470–cysteine 499, cysteine 506–cysteine 515, cysteine 510–cysteine 523, cysteine 526–cysteine 535, cysteine 539–cysteine 555, cysteine 558–cysteine 571, cysteine 562–cysteine 579, cysteine 582–cysteine 591, cysteine 595–cysteine 617, cysteine 620–cysteine 628, and cysteine 624–cysteine 636. An N-linked (GlcNAc...) asparagine glycan is attached at asparagine 528. N-linked (GlcNAc...) asparagine glycosylation occurs at asparagine 568. The N-linked (GlcNAc...) asparagine glycan is linked to asparagine 603. A helical membrane pass occupies residues 646–668 (IATGMVGALLLLLVVALGIGLFM). Topologically, residues 669-1210 (RRRHIVRKRT…APQSSEFIGA (542 aa)) are cytoplasmic. Threonine 678 carries the post-translational modification Phosphothreonine; by PKC and PKD/PRKD1. The important for dimerization, phosphorylation and activation stretch occupies residues 688 to 704 (LVEPLTPSGEAPNQALL). Threonine 693 bears the Phosphothreonine; by PKD/PRKD1 mark. The residue at position 695 (serine 695) is a Phosphoserine. Residues 712–979 (FKKIKVLGSG…KMARDPQRYL (268 aa)) enclose the Protein kinase domain. Lysine 716 is covalently cross-linked (Glycyl lysine isopeptide (Lys-Gly) (interchain with G-Cter in ubiquitin)). 718–726 (LGSGAFGTV) contributes to the ATP binding site. A Glycyl lysine isopeptide (Lys-Gly) (interchain with G-Cter in ubiquitin) cross-link involves residue lysine 737. Position 745 (lysine 745) interacts with ATP. N6-(2-hydroxyisobutyryl)lysine is present on lysine 745. Residues lysine 754 and lysine 757 each participate in a glycyl lysine isopeptide (Lys-Gly) (interchain with G-Cter in ubiquitin) cross-link. 790 to 791 (TQ) contacts ATP. Residue aspartate 837 is the Proton acceptor of the active site. Aspartate 855 contacts ATP. Residue lysine 867 forms a Glycyl lysine isopeptide (Lys-Gly) (interchain with G-Cter in ubiquitin) linkage. At tyrosine 869 the chain carries Phosphotyrosine. Residues lysine 929, lysine 960, and lysine 970 each participate in a glycyl lysine isopeptide (Lys-Gly) (interchain with G-Cter in ubiquitin) cross-link. Residues serine 991 and serine 995 each carry the phosphoserine modification. Residues tyrosine 998 and tyrosine 1016 each carry the phosphotyrosine; by autocatalysis modification. 2 positions are modified to phosphoserine: serine 1026 and serine 1039. Threonine 1041 is modified (phosphothreonine). Serine 1042 carries the phosphoserine modification. A lipid anchor (S-palmitoyl cysteine) is attached at cysteine 1049. Serine 1064 is subject to Phosphoserine. Tyrosine 1069 carries the phosphotyrosine modification. Serine 1070, serine 1071, and serine 1081 each carry phosphoserine. Phosphotyrosine; by autocatalysis is present on residues tyrosine 1092 and tyrosine 1110. Residues 1097–1137 (VPKRPAGSVQNPVYHNQPLNPAPSRDPHYQDPHSTAVGNPE) are disordered. Composition is skewed to polar residues over residues 1104–1115 (SVQNPVYHNQPL) and 1128–1137 (PHSTAVGNPE). The S-palmitoyl cysteine moiety is linked to residue cysteine 1146. At serine 1166 the chain carries Phosphoserine. A phosphotyrosine; by autocatalysis mark is found at tyrosine 1172 and tyrosine 1197. Arginine 1199 is subject to Omega-N-methylarginine.

Belongs to the protein kinase superfamily. Tyr protein kinase family. EGF receptor subfamily. As to quaternary structure, binding of the ligand triggers homo- and/or heterodimerization of the receptor triggering its autophosphorylation. Heterodimer with ERBB2. Forms a complex with CCDC88A/GIV (via SH2-like regions) and GNAI3 which leads to enhanced EGFR signaling and triggering of cell migration; binding to CCDC88A requires autophosphorylation of the EGFR C-terminal region, and ligand stimulation is required for recruitment of GNAI3 to the complex. Interacts with ERRFI1; inhibits dimerization of the kinase domain and autophosphorylation. Part of a complex with ERBB2 and either PIK3C2A or PIK3C2B. Interacts with GRB2; an adapter protein coupling the receptor to downstream signaling pathways. Interacts with GAB2; involved in signaling downstream of EGFR. Interacts with STAT3; mediates EGFR downstream signaling in cell proliferation. Interacts with RIPK1; involved in NF-kappa-B activation. Interacts (autophosphorylated) with CBL, CBLB and CBLC; involved in EGFR ubiquitination and regulation; interaction with CBL is reduced in the presence of tensin TNS4. Interacts with SOCS5; regulates EGFR degradation through ELOC- and ELOB-mediated ubiquitination and proteasomal degradation. Interacts with PRMT5; methylates EGFR and enhances interaction with PTPN6. Interacts (phosphorylated) with PTPN6; inhibits EGFR-dependent activation of MAPK/ERK. Interacts with COPG1; essential for regulation of EGF-dependent nuclear transport of EGFR by retrograde trafficking from the Golgi to the ER. Interacts with TNK2; this interaction is dependent on EGF stimulation and kinase activity of EGFR. Interacts with PCNA; positively regulates PCNA. Interacts with PELP1. Interacts with MUC1. Interacts with AP2M1. Interacts with FER. May interact with EPS8; mediates EPS8 phosphorylation. Interacts (via SH2 domains) with GRB2, NCK1 and NCK2. Interacts with ATXN2. Interacts with GAREM1. Interacts (ubiquitinated) with ANKRD13A/B/D; the interaction is direct and may regulate EGFR internalization after EGF stimulation. Interacts with GPER1; the interaction occurs in an estrogen-dependent manner. Interacts (via C-terminal cytoplasmic kinase domain) with ZPR1 (via zinc fingers). Interacts with RNF115 and RNF126. Interacts with GPRC5A (via its transmembrane domain). Interacts with FAM83B; positively regulates EGFR inducing its autophosphorylation in absence of stimulation by EGF. Interacts with LAPTM4B; positively correlates with EGFR activation. Interacts with STX19. Interacts with CD44. Interacts with PGRMC1; the interaction requires PGRMC1 homodimerization. Interacts with PIKFYVE. Interacts with NEU3. Interacts with TRAF4. Interacts with the ant venom OMEGA-myrmeciitoxin(02)-Mg1a. Interacts with CD82; this interaction facilitates ligand-induced endocytosis of the receptor and its subsequent desensitization. Post-translationally, phosphorylated on Tyr residues in response to EGF. Phosphorylation at Ser-695 is partial and occurs only if Thr-693 is phosphorylated. Phosphorylation at Thr-678 and Thr-693 by PRKD1 inhibits EGF-induced MAPK8/JNK1 activation. Dephosphorylation by PTPRJ prevents endocytosis and stabilizes the receptor at the plasma membrane. Autophosphorylation at Tyr-1197 is stimulated by methylation at Arg-1199 and enhances interaction with PTPN6. Autophosphorylation at Tyr-1092 and/or Tyr-1110 recruits STAT3. Dephosphorylated by PTPN1 and PTPN2. In terms of processing, monoubiquitinated and polyubiquitinated upon EGF stimulation; which does not affect tyrosine kinase activity or signaling capacity but may play a role in lysosomal targeting. Polyubiquitin linkage is mainly through 'Lys-63', but linkage through 'Lys-48', 'Lys-11' and 'Lys-29' also occurs. Deubiquitination by OTUD7B prevents degradation. Ubiquitinated by RNF115 and RNF126. Ubiquitinated by ZNRF1 or CBL at different lysines in response to EGF stimulation; leading to recruitment of the ESCRT machinery and subsequent degradation in the lysosomes. Deubiquitinated by UCHL1 leading to the inhibition of its degradation. Palmitoylated on Cys residues by ZDHHC20. Palmitoylation inhibits internalization after ligand binding, and increases the persistence of tyrosine-phosphorylated EGFR at the cell membrane. Palmitoylation increases the amplitude and duration of EGFR signaling. Post-translationally, methylated. Methylation at Arg-1199 by PRMT5 stimulates phosphorylation at Tyr-1197. Hypothalamus.

It is found in the cell membrane. The protein localises to the endoplasmic reticulum membrane. The protein resides in the golgi apparatus membrane. Its subcellular location is the nucleus membrane. It localises to the endosome. It is found in the endosome membrane. The protein localises to the nucleus. The catalysed reaction is L-tyrosyl-[protein] + ATP = O-phospho-L-tyrosyl-[protein] + ADP + H(+). With respect to regulation, endocytosis and inhibition of the activated EGFR by phosphatases like PTPRJ and PTPRK constitute immediate regulatory mechanisms. Upon EGF-binding phosphorylates EPS15 that regulates EGFR endocytosis and activity. Moreover, inducible feedback inhibitors including LRIG1, SOCS4, SOCS5 and ERRFI1 constitute alternative regulatory mechanisms for the EGFR signaling. Receptor tyrosine kinase binding ligands of the EGF family and activating several signaling cascades to convert extracellular cues into appropriate cellular responses. Known ligands include EGF, TGFA/TGF-alpha, AREG, epigen/EPGN, BTC/betacellulin, epiregulin/EREG and HBEGF/heparin-binding EGF. Ligand binding triggers receptor homo- and/or heterodimerization and autophosphorylation on key cytoplasmic residues. The phosphorylated receptor recruits adapter proteins like GRB2 which in turn activates complex downstream signaling cascades. Activates at least 4 major downstream signaling cascades including the RAS-RAF-MEK-ERK, PI3 kinase-AKT, PLCgamma-PKC and STATs modules. May also activate the NF-kappa-B signaling cascade. Also directly phosphorylates other proteins like RGS16, activating its GTPase activity and probably coupling the EGF receptor signaling to the G protein-coupled receptor signaling. Also phosphorylates MUC1 and increases its interaction with SRC and CTNNB1/beta-catenin. Positively regulates cell migration via interaction with CCDC88A/GIV which retains EGFR at the cell membrane following ligand stimulation, promoting EGFR signaling which triggers cell migration. Plays a role in enhancing learning and memory performance. Plays a role in mammalian pain signaling (long-lasting hypersensitivity). This chain is Epidermal growth factor receptor (EGFR), found in Macaca mulatta (Rhesus macaque).